We begin with the raw amino-acid sequence, 155 residues long: WPP domain-containing protein 1 (155 aa).

Disordered regions lie at residues 1–41 and 124–155; these read MAET…VTIS and SVKA…SSEA. The segment covering 7–39 has biased composition (low complexity); sequence ESITTSSPPPISETENSTTLPTTETEKNPNPVT. The segment at 28 to 131 is WPP; that stretch reads TTETEKNPNP…LESVKAKSNV (104 aa). Over residues 146–155 the composition is skewed to basic and acidic residues; sequence VDSKIDSSEA.

In terms of assembly, binds to FPP proteins. Interacts with WAP, WIP1, WIP2 and WIP3 through its WPP domain. Interacts with HSP70-1, HSP70-3 and WIT1. Component of a ternary complex composed of WPP1, HSP70-1 and WIT1. Expressed in roots, stems and leaves.

Its subcellular location is the nucleus envelope. It localises to the cytoplasm. It is found in the nucleus. The protein localises to the golgi apparatus. The protein resides in the nucleus matrix. Regulates the mitotic activity in roots. Plays a role with HSP70-1 in facilitating WIT1 nuclear envelope targeting. This Arabidopsis thaliana (Mouse-ear cress) protein is WPP domain-containing protein 1 (WPP1).